A 187-amino-acid polypeptide reads, in one-letter code: Peptidyl-tRNA hydrolase (187 aa).

Residue Tyr-18 coordinates tRNA. His-23 functions as the Proton acceptor in the catalytic mechanism. Residues Phe-65, Asn-67, and Asn-113 each contribute to the tRNA site.

This sequence belongs to the PTH family. As to quaternary structure, monomer.

The protein resides in the cytoplasm. It catalyses the reaction an N-acyl-L-alpha-aminoacyl-tRNA + H2O = an N-acyl-L-amino acid + a tRNA + H(+). Functionally, hydrolyzes ribosome-free peptidyl-tRNAs (with 1 or more amino acids incorporated), which drop off the ribosome during protein synthesis, or as a result of ribosome stalling. In terms of biological role, catalyzes the release of premature peptidyl moieties from peptidyl-tRNA molecules trapped in stalled 50S ribosomal subunits, and thus maintains levels of free tRNAs and 50S ribosomes. The sequence is that of Peptidyl-tRNA hydrolase from Coxiella burnetii (strain CbuK_Q154) (Coxiella burnetii (strain Q154)).